The chain runs to 123 residues: Cell division protein SepF (123 aa).

The protein belongs to the SepF family. Homodimer. Interacts with FtsZ.

The protein resides in the cytoplasm. Its function is as follows. Cell division protein that is part of the divisome complex and is recruited early to the Z-ring. Probably stimulates Z-ring formation, perhaps through the cross-linking of FtsZ protofilaments. Its function overlaps with FtsA. The protein is Cell division protein SepF of Tropheryma whipplei (strain TW08/27) (Whipple's bacillus).